The primary structure comprises 527 residues: DNA polymerase epsilon subunit 2 (527 aa).

This sequence belongs to the DNA polymerase epsilon subunit B family. Component of the DNA polymerase epsilon complex consisting of four subunits: the catalytic subunit POLE and the accessory subunits POLE2, POLE3 and POLE4.

The protein localises to the nucleus. Its function is as follows. Accessory component of the DNA polymerase epsilon complex. Participates in DNA repair and in chromosomal DNA replication. The polypeptide is DNA polymerase epsilon subunit 2 (Pole2) (Mus musculus (Mouse)).